Reading from the N-terminus, the 357-residue chain is Peptide chain release factor 1 (357 aa).

The residue at position 234 (Q234) is an N5-methylglutamine.

It belongs to the prokaryotic/mitochondrial release factor family. In terms of processing, methylated by PrmC. Methylation increases the termination efficiency of RF1.

The protein resides in the cytoplasm. Its function is as follows. Peptide chain release factor 1 directs the termination of translation in response to the peptide chain termination codons UAG and UAA. This is Peptide chain release factor 1 from Frankia casuarinae (strain DSM 45818 / CECT 9043 / HFP020203 / CcI3).